The sequence spans 327 residues: N-acetylmuramoyl-L-alanine amidase sle1 (327 aa).

The signal sequence occupies residues 1–25 (MRKKIIATVIGTSALAAVTWTNADA). 3 consecutive LysM domains span residues 27 to 70 (TTYK…SLKV), 86 to 129 (STYT…KLKV), and 150 to 193 (TTYT…KLKV). The disordered stretch occupies residues 68–89 (LKVSGSTSSSTSSNTSTGSTYT). A compositionally biased stretch (low complexity) spans 71–87 (SGSTSSSTSSNTSTGST). A Peptidase C51 domain is found at 203 to 327 (GSSSTGSAGY…SQVSSYVYIH (125 aa)).

The protein resides in the secreted. Its subcellular location is the cell surface. It carries out the reaction Hydrolyzes the link between N-acetylmuramoyl residues and L-amino acid residues in certain cell-wall glycopeptides.. Peptidoglycan hydrolase involved in the splitting of the septum during cell division. The protein is N-acetylmuramoyl-L-alanine amidase sle1 (sle1) of Staphylococcus saprophyticus subsp. saprophyticus (strain ATCC 15305 / DSM 20229 / NCIMB 8711 / NCTC 7292 / S-41).